A 379-amino-acid chain; its full sequence is Cytochrome b (379 aa).

The next 8 membrane-spanning stretches (helical) occupy residues 33 to 53 (FGSL…FLAM), 77 to 98 (WLIR…FLHV), 113 to 133 (WNIG…GYVL), 178 to 198 (FFAF…VHLL), 226 to 246 (IKDV…VLFS), 288 to 308 (LGGV…PILH), 320 to 340 (LSQC…WIGG), and 347 to 367 (FITI…LALP). Heme b contacts are provided by histidine 83 and histidine 97. Heme b contacts are provided by histidine 182 and histidine 196.

It belongs to the cytochrome b family. As to quaternary structure, the cytochrome bc1 complex contains 11 subunits: 3 respiratory subunits (MT-CYB, CYC1 and UQCRFS1), 2 core proteins (UQCRC1 and UQCRC2) and 6 low-molecular weight proteins (UQCRH/QCR6, UQCRB/QCR7, UQCRQ/QCR8, UQCR10/QCR9, UQCR11/QCR10 and a cleavage product of UQCRFS1). This cytochrome bc1 complex then forms a dimer. It depends on heme b as a cofactor.

Its subcellular location is the mitochondrion inner membrane. Its function is as follows. Component of the ubiquinol-cytochrome c reductase complex (complex III or cytochrome b-c1 complex) that is part of the mitochondrial respiratory chain. The b-c1 complex mediates electron transfer from ubiquinol to cytochrome c. Contributes to the generation of a proton gradient across the mitochondrial membrane that is then used for ATP synthesis. The chain is Cytochrome b (MT-CYB) from Sciurus niger (Eastern fox squirrel).